A 279-amino-acid chain; its full sequence is Thermitase (279 aa).

Asp-5 contributes to the Ca(2+) binding site. Residues 12–277 (QYGPQKIQAP…KGRVNAYKAV (266 aa)) form the Peptidase S8 domain. The active-site Charge relay system is Asp-38. Ca(2+) contacts are provided by Asp-47, Asp-57, Asp-60, Asp-62, Thr-64, and Gln-66. His-71 serves as the catalytic Charge relay system. Residues Val-82, Asn-85, Thr-87, and Ile-89 each coordinate Ca(2+). Ala-173, Tyr-175, and Ala-178 together coordinate Na(+). Val-199 and Asp-201 together coordinate Ca(2+). Asp-201 lines the Na(+) pocket. Ser-225 functions as the Charge relay system in the catalytic mechanism.

The protein belongs to the peptidase S8 family. Requires Ca(2+) as cofactor. Na(+) is required as a cofactor.

It localises to the secreted. The catalysed reaction is Hydrolysis of proteins, including collagen.. The chain is Thermitase from Thermoactinomyces vulgaris.